Consider the following 355-residue polypeptide: Septin-2B (355 aa).

The region spanning 33–305 (KGFEFTLMVV…ENFRSERLKK (273 aa)) is the Septin-type G domain. Residues 43 to 50 (GESGLGKS) form a G1 motif region. GTP is bound by residues 43-50 (GESGLGKS), Thr77, Gly103, 182-190 (KADTLTLRE), Gly240, and Arg255. A G3 motif region spans residues 100–103 (DTPG). The G4 motif stretch occupies residues 181-184 (AKAD). The important for dimerization stretch occupies residues 259–269 (WGVVEVENPEH).

It belongs to the TRAFAC class TrmE-Era-EngA-EngB-Septin-like GTPase superfamily. Septin GTPase family. As to quaternary structure, septins polymerize into heterooligomeric protein complexes that form filaments, and associate with cellular membranes, actin filaments and microtubules. GTPase activity is required for filament formation. Can form heterooligomers with other family members and form filaments. Interacts with wdpcp.

The protein localises to the cytoplasm. The protein resides in the cytoskeleton. Its subcellular location is the spindle. It is found in the cleavage furrow. It localises to the midbody. The protein localises to the cell cortex. The protein resides in the cell projection. Its subcellular location is the cilium membrane. Filament-forming cytoskeletal GTPase. Required for normal organization of the actin cytoskeleton. Plays a role in the biogenesis of polarized columnar-shaped epithelium. Required for the progression through mitosis through regulation of chromosome congression. During anaphase, may be required for chromosome segregation and spindle elongation. Plays a role in ciliogenesis and collective cell movements including convergent extension during gastrulation. In cilia, required for the integrity of the diffusion barrier at the base of the primary cilium that prevents diffusion of transmembrane proteins between the cilia and plasma membranes. Controls cell shape and not polarization of cells during convergent extension. This Xenopus tropicalis (Western clawed frog) protein is Septin-2B (sept2-B).